A 71-amino-acid chain; its full sequence is Conotoxin LvVIB (71 aa).

An N-terminal signal peptide occupies residues 1–17 (VLIIAVLFLTASELVTA). The propeptide occupies 18 to 41 (DYTRDKWQYRAASLRDAMRNFRDT). Disulfide bonds link Cys-43–Cys-57, Cys-50–Cys-62, and Cys-56–Cys-69.

This sequence belongs to the conotoxin O1 superfamily. In terms of tissue distribution, expressed by the venom duct.

The protein localises to the secreted. The sequence is that of Conotoxin LvVIB from Conus lividus (Livid cone).